The sequence spans 57 residues: Large ribosomal subunit protein bL32 (57 aa).

Residues 1-20 (MAVQQRRVSKSRKGMRRSHD) are disordered. Positions 7-19 (RVSKSRKGMRRSH) are enriched in basic residues.

This sequence belongs to the bacterial ribosomal protein bL32 family.

In Ureaplasma urealyticum serovar 10 (strain ATCC 33699 / Western), this protein is Large ribosomal subunit protein bL32.